The sequence spans 496 residues: Probable cytosol aminopeptidase (496 aa).

Lys-258 and Asp-263 together coordinate Mn(2+). Lys-270 is an active-site residue. Asp-281, Asp-340, and Glu-342 together coordinate Mn(2+). Arg-344 is a catalytic residue.

This sequence belongs to the peptidase M17 family. Mn(2+) serves as cofactor.

The protein resides in the cytoplasm. The enzyme catalyses Release of an N-terminal amino acid, Xaa-|-Yaa-, in which Xaa is preferably Leu, but may be other amino acids including Pro although not Arg or Lys, and Yaa may be Pro. Amino acid amides and methyl esters are also readily hydrolyzed, but rates on arylamides are exceedingly low.. It carries out the reaction Release of an N-terminal amino acid, preferentially leucine, but not glutamic or aspartic acids.. Presumably involved in the processing and regular turnover of intracellular proteins. Catalyzes the removal of unsubstituted N-terminal amino acids from various peptides. This Helicobacter pylori (strain Shi470) protein is Probable cytosol aminopeptidase.